The sequence spans 783 residues: Endonuclease MutS2 (783 aa).

328-335 (GPNTGGKT) contributes to the ATP binding site. Residues 708 to 783 (LDLRGKRYEE…GSGCTIATLG (76 aa)) form the Smr domain.

This sequence belongs to the DNA mismatch repair MutS family. MutS2 subfamily. Homodimer. Binds to stalled ribosomes, contacting rRNA.

In terms of biological role, endonuclease that is involved in the suppression of homologous recombination and thus may have a key role in the control of bacterial genetic diversity. Functionally, acts as a ribosome collision sensor, splitting the ribosome into its 2 subunits. Detects stalled/collided 70S ribosomes which it binds and splits by an ATP-hydrolysis driven conformational change. Acts upstream of the ribosome quality control system (RQC), a ribosome-associated complex that mediates the extraction of incompletely synthesized nascent chains from stalled ribosomes and their subsequent degradation. Probably generates substrates for RQC. This is Endonuclease MutS2 from Streptococcus thermophilus (strain ATCC BAA-250 / LMG 18311).